The following is a 295-amino-acid chain: Dipeptide transport system permease protein DppC (295 aa).

The next 7 membrane-spanning stretches (helical) occupy residues 27 to 47 (ALIG…APYI), 97 to 117 (VFAG…LGLI), 132 to 152 (LIDI…VSIL), 156 to 178 (LANA…TRAA), 202 to 222 (MFIV…TMGI), 226 to 246 (ILEL…TPEL), and 262 to 282 (WLVT…NLMG). The ABC transmembrane type-1 domain occupies 93-282 (TRISVFAGFI…SLVLAFNLMG (190 aa)).

This sequence belongs to the binding-protein-dependent transport system permease family. OppBC subfamily.

It is found in the cell inner membrane. In terms of biological role, part of the ABC transporter DppBCDF involved in dipeptide transport. Responsible for the translocation of the substrate across the membrane. The polypeptide is Dipeptide transport system permease protein DppC (dppC) (Haemophilus influenzae (strain ATCC 51907 / DSM 11121 / KW20 / Rd)).